A 252-amino-acid chain; its full sequence is uncharacterized protein (252 aa).

One can recognise an ABC transporter domain in the interval 13-247 (ITLENVNKWY…PKSERTRAFL (235 aa)). An ATP-binding site is contributed by 45–52 (GPSGSGKS).

Belongs to the ABC transporter superfamily.

It is found in the cell inner membrane. Its function is as follows. Probably part of a binding-protein-dependent transport system YdhWXYZ for an amino acid. Probably responsible for energy coupling to the transport system. This is an uncharacterized protein from Escherichia coli (strain K12).